Reading from the N-terminus, the 93-residue chain is MGIADYFRERRRSRRGSASVAKERLQIIVSHERAERGGPDYLPMLRQELLEVVRRYVTVDPDAVRVDVERDGPHEVLELNITLPEREEEGAQR.

Belongs to the MinE family.

Functionally, prevents the cell division inhibition by proteins MinC and MinD at internal division sites while permitting inhibition at polar sites. This ensures cell division at the proper site by restricting the formation of a division septum at the midpoint of the long axis of the cell. This chain is Cell division topological specificity factor, found in Halorhodospira halophila (strain DSM 244 / SL1) (Ectothiorhodospira halophila (strain DSM 244 / SL1)).